We begin with the raw amino-acid sequence, 255 residues long: DNA repair protein RecO (255 aa).

Belongs to the RecO family.

Involved in DNA repair and RecF pathway recombination. This chain is DNA repair protein RecO, found in Listeria monocytogenes serotype 4a (strain HCC23).